The following is a 407-amino-acid chain: Lymphocyte transmembrane adapter 1 (407 aa).

The interval 1 to 25 is disordered; the sequence is MYSTPAPPEVTRRNSEPSTRQGTLG. At 1–33 the chain is on the extracellular side; it reads MYSTPAPPEVTRRNSEPSTRQGTLGSLQGEKGQ. Polar residues predominate over residues 16 to 25; the sequence is EPSTRQGTLG. Residues 34–54 traverse the membrane as a helical; Signal-anchor for type III membrane protein segment; that stretch reads IIFPGFVVLLTIILVIIAACI. At 55 to 407 the chain is on the cytoplasmic side; it reads LWSWKKQKKR…LATETSDEDA (353 aa). Residues 109–131 form a disordered region; sequence ESLLSRASDSPEPEAPQANGSLQ. 4 positions are modified to phosphotyrosine: Y185, Y260, Y286, and Y353. Residues 331–388 are disordered; it reads SAQSEDSAMVHREEQSSEDSSDYETVLVAELEGRDWKQGPGTQHPSDEGTPGDLAGKL.

As to quaternary structure, when phosphorylated, interacts with GRB2, PIK3R1 and GRAP2. In terms of processing, phosphorylated on tyrosines upon TCR or BCR activation; which leads to the recruitment of GRB2, PIK3R1 and GRAP2. As to expression, expressed in T-cells and B-cells.

It is found in the cell membrane. In terms of biological role, negatively regulates TCR (T-cell antigen receptor)-mediated signaling in T-cells and BCR (B-cell antigen receptor)-mediated signaling in B-cells. This is Lymphocyte transmembrane adapter 1 (Lax1) from Mus musculus (Mouse).